The chain runs to 20 residues: Cytochrome c oxidase subunit 8B, mitochondrial (20 aa).

It belongs to the cytochrome c oxidase VIII family. As to quaternary structure, component of the cytochrome c oxidase (complex IV, CIV), a multisubunit enzyme composed of 14 subunits. The complex is composed of a catalytic core of 3 subunits MT-CO1, MT-CO2 and MT-CO3, encoded in the mitochondrial DNA, and 11 supernumerary subunits COX4I, COX5A, COX5B, COX6A, COX6B, COX6C, COX7A, COX7B, COX7C, COX8 and NDUFA4, which are encoded in the nuclear genome. The complex exists as a monomer or a dimer and forms supercomplexes (SCs) in the inner mitochondrial membrane with NADH-ubiquinone oxidoreductase (complex I, CI) and ubiquinol-cytochrome c oxidoreductase (cytochrome b-c1 complex, complex III, CIII), resulting in different assemblies (supercomplex SCI(1)III(2)IV(1) and megacomplex MCI(2)III(2)IV(2)).

It is found in the mitochondrion inner membrane. It participates in energy metabolism; oxidative phosphorylation. Its function is as follows. Component of the cytochrome c oxidase, the last enzyme in the mitochondrial electron transport chain which drives oxidative phosphorylation. The respiratory chain contains 3 multisubunit complexes succinate dehydrogenase (complex II, CII), ubiquinol-cytochrome c oxidoreductase (cytochrome b-c1 complex, complex III, CIII) and cytochrome c oxidase (complex IV, CIV), that cooperate to transfer electrons derived from NADH and succinate to molecular oxygen, creating an electrochemical gradient over the inner membrane that drives transmembrane transport and the ATP synthase. Cytochrome c oxidase is the component of the respiratory chain that catalyzes the reduction of oxygen to water. Electrons originating from reduced cytochrome c in the intermembrane space (IMS) are transferred via the dinuclear copper A center (CU(A)) of subunit 2 and heme A of subunit 1 to the active site in subunit 1, a binuclear center (BNC) formed by heme A3 and copper B (CU(B)). The BNC reduces molecular oxygen to 2 water molecules using 4 electrons from cytochrome c in the IMS and 4 protons from the mitochondrial matrix. In Thunnus obesus (Bigeye tuna), this protein is Cytochrome c oxidase subunit 8B, mitochondrial.